Reading from the N-terminus, the 101-residue chain is Small ribosomal subunit protein uS14 (101 aa).

The protein belongs to the universal ribosomal protein uS14 family. Part of the 30S ribosomal subunit. Contacts proteins S3 and S10.

Binds 16S rRNA, required for the assembly of 30S particles and may also be responsible for determining the conformation of the 16S rRNA at the A site. The chain is Small ribosomal subunit protein uS14 from Salmonella schwarzengrund (strain CVM19633).